A 242-amino-acid chain; its full sequence is Protein unc-119 homolog B-A (242 aa).

Basic and acidic residues predominate over residues 1-20 (MSGSKREAALTGQPKDERKK). The segment at 1 to 49 (MSGSKREAALTGQPKDERKKSGGGVINRLKARRVQGKESGTSDQSSVTP) is disordered. Residues 38–48 (ESGTSDQSSVT) are compositionally biased toward polar residues. Tyr-133 lines the tetradecanoate pocket.

It belongs to the PDE6D/unc-119 family.

Myristoyl-binding protein that acts as a cargo adapter: specifically binds the myristoyl moiety of a subset of N-terminally myristoylated proteins and is required for their localization. Plays a key role in localization of proteins to the primary cilium membrane. The protein is Protein unc-119 homolog B-A (unc119b-a) of Xenopus laevis (African clawed frog).